The primary structure comprises 200 residues: High mobility group protein B3 (200 aa).

Lysine 3 carries the post-translational modification N6-acetyllysine. DNA-binding regions (HMG box) lie at residues 9 to 79 and 93 to 161; these read PKGK…KDYG and PKRP…ADYK. Cysteine 23 carries the cysteine sulfonic acid (-SO3H); alternate modification. Cysteines 23 and 45 form a disulfide. N6-acetyllysine is present on residues lysine 30 and lysine 43. Cysteine 45 carries the post-translational modification Cysteine sulfonic acid (-SO3H); alternate. Positions 71–97 are disordered; it reads YDREMKDYGPAKGGKKKKDPNAPKRPP. Serine 98 carries the phosphoserine modification. Cysteine 104 bears the Cysteine sulfonic acid (-SO3H) mark. N6-acetyllysine is present on residues lysine 112 and lysine 139. Residues 163–200 form a disordered region; it reads KGKFDGAKGAAKVARKKVEEEDEEDEEEEEEEEEEEDE. A compositionally biased stretch (acidic residues) spans 182-200; that stretch reads EEDEEDEEEEEEEEEEEDE.

Belongs to the HMGB family. Reduction/oxidation of cysteine residues Cys-23, Cys-45 and Cys-104 and a possible intramolecular disulfide bond involving Cys-23 and Cys-45 give rise to different redox forms with specific functional activities in various cellular compartments: 1- fully reduced HMGB3 (HMGB3C23hC45hC104h), 2- disulfide HMGB3 (HMGB3C23-C45C104h) and 3- sulfonyl HMGB3 (HMGB3C23soC45soC104so).

Its subcellular location is the nucleus. It is found in the chromosome. The protein resides in the cytoplasm. Its function is as follows. Multifunctional protein with various roles in different cellular compartments. May act in a redox sensitive manner. Associates with chromatin and binds DNA with a preference for non-canonical DNA structures such as single-stranded DNA. Can bend DNA and enhance DNA flexibility by looping thus providing a mechanism to promote activities on various gene promoters. Proposed to be involved in the innate immune response to nucleic acids by acting as a cytoplasmic promiscuous immunogenic DNA/RNA sensor. Negatively regulates B-cell and myeloid cell differentiation. In hematopoietic stem cells may regulate the balance between self-renewal and differentiation. Involved in negative regulation of canonical Wnt signaling. The protein is High mobility group protein B3 (HMGB3) of Bos taurus (Bovine).